The following is a 313-amino-acid chain: Fe-S cluster assembly protein dre2 (313 aa).

Disordered stretches follow at residues 1–25 (MSIT…SQKR) and 151–187 (GRKK…AQNN). Residues 20-145 (NGSQKRNLLL…FEKPVQEAAV (126 aa)) form an N-terminal SAM-like domain region. The tract at residues 146-203 (PLKLGGRKKKDKTNGVNGVQNGVATNGASTNGVGMFDPAQNNDDELIDEDALLSDDDL) is linker. Residues 159–177 (NGVNGVQNGVATNGASTNG) show a composition bias toward polar residues. [2Fe-2S] cluster is bound by residues cysteine 213, cysteine 225, cysteine 228, and cysteine 230. Positions 213-230 (CVPETAKKRRRPCKDCTC) are fe-S binding site A. 4 residues coordinate [4Fe-4S] cluster: cysteine 276, cysteine 279, cysteine 287, and cysteine 290. Short sequence motifs (cx2C motif) lie at residues 276–279 (CNSC) and 287–290 (CSSC). The interval 276 to 290 (CNSCSLGDAFRCSSC) is fe-S binding site B.

It belongs to the anamorsin family. In terms of assembly, monomer. Interacts with tah18. Interacts with mia40. [2Fe-2S] cluster serves as cofactor. It depends on [4Fe-4S] cluster as a cofactor.

Its subcellular location is the cytoplasm. It localises to the mitochondrion intermembrane space. Functionally, component of the cytosolic iron-sulfur (Fe-S) protein assembly (CIA) machinery required for the maturation of extramitochondrial Fe-S proteins. Part of an electron transfer chain functioning in an early step of cytosolic Fe-S biogenesis, facilitating the de novo assembly of a [4Fe-4S] cluster on the scaffold complex cfd1-nbp35. Electrons are transferred to dre2 from NADPH via the FAD- and FMN-containing protein tah18. Tah18-dre2 are also required for the assembly of the diferric tyrosyl radical cofactor of ribonucleotide reductase (RNR), probably by providing electrons for reduction during radical cofactor maturation in the catalytic small subunit rnr2. In Aspergillus oryzae (strain ATCC 42149 / RIB 40) (Yellow koji mold), this protein is Fe-S cluster assembly protein dre2.